Consider the following 381-residue polypeptide: Arogenate dehydratase/prephenate dehydratase 2, chloroplastic (381 aa).

The tract at residues 1-32 (MAMHTVRLSPATQLHGGISSNLSPPNRKPNNS) is disordered. The N-terminal 66 residues, 1–66 (MAMHTVRLSP…DANGRDNSVR (66 aa)), are a transit peptide targeting the chloroplast. A compositionally biased stretch (polar residues) spans 18–32 (ISSNLSPPNRKPNNS). Positions 100–275 (RVAYQGVRGA…NVTRFLMLAR (176 aa)) constitute a Prephenate dehydratase domain. Residues 289-375 (SIVFSLEEGP…TFLRVLGSYP (87 aa)) enclose the ACT domain.

In terms of tissue distribution, expressed in roots, leaves, stems, flowers and siliques. Most abundant in leaves and seeds.

It is found in the plastid. The protein localises to the chloroplast stroma. It catalyses the reaction L-arogenate + H(+) = L-phenylalanine + CO2 + H2O. The enzyme catalyses prephenate + H(+) = 3-phenylpyruvate + CO2 + H2O. It participates in amino-acid biosynthesis; L-phenylalanine biosynthesis; L-phenylalanine from L-arogenate: step 1/1. It functions in the pathway amino-acid biosynthesis; L-phenylalanine biosynthesis; phenylpyruvate from prephenate: step 1/1. Converts the prephenate produced from the shikimate-chorismate pathway into phenylalanine. Dehydratase that uses arogenate and prephenate as substrates. Utilzes more efficiently arogenate than prephenate. Required for chloroplast division prior to ARC5, but in an ARC3- and ARC6-dependent manner, especially involved in the Z-ring formation. The chain is Arogenate dehydratase/prephenate dehydratase 2, chloroplastic from Arabidopsis thaliana (Mouse-ear cress).